Here is a 310-residue protein sequence, read N- to C-terminus: NAD-dependent protein deacylase sirtuin-5, mitochondrial (310 aa).

Residues 1-36 (MQPLQIAPCRLLYGLYRGLKSPASTGTRICPAMARP) constitute a mitochondrion transit peptide. The Deacetylase sirtuin-type domain occupies 37 to 307 (SSNMADFRKL…PEALAPHETG (271 aa)). 58–77 (GAGVSAESGVPTFRGAGGYW) lines the NAD(+) pocket. Substrate contacts are provided by Tyr-102 and Arg-105. 140–143 (QNID) lines the NAD(+) pocket. The Proton acceptor role is filled by His-158. 4 residues coordinate Zn(2+): Cys-166, Cys-169, Cys-207, and Cys-212. NAD(+) is bound by residues 249–251 (GTS), 275–277 (NME), and Cys-293.

This sequence belongs to the sirtuin family. Class III subfamily. In terms of assembly, monomer. Homodimer. Interacts with CPS1. Interacts with PCCA. The cofactor is Zn(2+).

It is found in the mitochondrion. It localises to the cytoplasm. The protein resides in the cytosol. The protein localises to the nucleus. It catalyses the reaction N(6)-malonyl-L-lysyl-[protein] + NAD(+) + H2O = 2''-O-malonyl-ADP-D-ribose + nicotinamide + L-lysyl-[protein]. The enzyme catalyses N(6)-succinyl-L-lysyl-[protein] + NAD(+) + H2O = 2''-O-succinyl-ADP-D-ribose + nicotinamide + L-lysyl-[protein]. It carries out the reaction N(6)-glutaryl-L-lysyl-[protein] + NAD(+) + H2O = 2''-O-glutaryl-ADP-D-ribose + nicotinamide + L-lysyl-[protein]. Functionally, NAD-dependent lysine demalonylase, desuccinylase and deglutarylase that specifically removes malonyl, succinyl and glutaryl groups on target proteins. Activates CPS1 and contributes to the regulation of blood ammonia levels during prolonged fasting: acts by mediating desuccinylation and deglutarylation of CPS1, thereby increasing CPS1 activity in response to elevated NAD levels during fasting. Activates SOD1 by mediating its desuccinylation, leading to reduced reactive oxygen species. Activates SHMT2 by mediating its desuccinylation. Modulates ketogenesis through the desuccinylation and activation of HMGCS2. Has weak NAD-dependent protein deacetylase activity; however this activity may not be physiologically relevant in vivo. Can deacetylate cytochrome c (CYCS) and a number of other proteins in vitro such as UOX. The protein is NAD-dependent protein deacylase sirtuin-5, mitochondrial of Canis lupus familiaris (Dog).